We begin with the raw amino-acid sequence, 138 residues long: Ribulose bisphosphate carboxylase small subunit (138 aa).

Belongs to the RuBisCO small chain family. In terms of assembly, heterohexadecamer of 8 large and 8 small subunits.

The protein localises to the plastid. It is found in the chloroplast. RuBisCO catalyzes two reactions: the carboxylation of D-ribulose 1,5-bisphosphate, the primary event in carbon dioxide fixation, as well as the oxidative fragmentation of the pentose substrate in the photorespiration process. Both reactions occur simultaneously and in competition at the same active site. Although the small subunit is not catalytic it is essential for maximal activity. The chain is Ribulose bisphosphate carboxylase small subunit from Antithamnion sp. (Red alga).